A 223-amino-acid polypeptide reads, in one-letter code: Ribose-5-phosphate isomerase A (223 aa).

Substrate is bound by residues 32–35, 85–88, and 98–101; these read TGST, DGAD, and KGGG. Residue Glu107 is the Proton acceptor of the active site. Lys125 serves as a coordination point for substrate.

This sequence belongs to the ribose 5-phosphate isomerase family. Homodimer.

It catalyses the reaction aldehydo-D-ribose 5-phosphate = D-ribulose 5-phosphate. It participates in carbohydrate degradation; pentose phosphate pathway; D-ribose 5-phosphate from D-ribulose 5-phosphate (non-oxidative stage): step 1/1. Functionally, catalyzes the reversible conversion of ribose-5-phosphate to ribulose 5-phosphate. This Pseudomonas aeruginosa (strain LESB58) protein is Ribose-5-phosphate isomerase A.